A 171-amino-acid chain; its full sequence is uncharacterized protein (171 aa).

In terms of biological role, required for production of the bacteriocin SkfA. This is an uncharacterized protein from Bacillus subtilis (strain 168).